Here is a 1407-residue protein sequence, read N- to C-terminus: DNA-directed RNA polymerase subunit beta' (1407 aa).

Cys70, Cys72, Cys85, and Cys88 together coordinate Zn(2+). Residues Asp460, Asp462, and Asp464 each contribute to the Mg(2+) site. Residues Cys814, Cys888, Cys895, and Cys898 each coordinate Zn(2+). Position 972 is an N6-acetyllysine (Lys972).

Belongs to the RNA polymerase beta' chain family. In terms of assembly, the RNAP catalytic core consists of 2 alpha, 1 beta, 1 beta' and 1 omega subunit. When a sigma factor is associated with the core the holoenzyme is formed, which can initiate transcription. The cofactor is Mg(2+). It depends on Zn(2+) as a cofactor.

It carries out the reaction RNA(n) + a ribonucleoside 5'-triphosphate = RNA(n+1) + diphosphate. In terms of biological role, DNA-dependent RNA polymerase catalyzes the transcription of DNA into RNA using the four ribonucleoside triphosphates as substrates. The protein is DNA-directed RNA polymerase subunit beta' of Shigella boydii serotype 18 (strain CDC 3083-94 / BS512).